The sequence spans 232 residues: Enolase-phosphatase E1 (232 aa).

This sequence belongs to the HAD-like hydrolase superfamily. MasA/MtnC family. As to quaternary structure, monomer. The cofactor is Mg(2+).

It carries out the reaction 5-methylsulfanyl-2,3-dioxopentyl phosphate + H2O = 1,2-dihydroxy-5-(methylsulfanyl)pent-1-en-3-one + phosphate. Its pathway is amino-acid biosynthesis; L-methionine biosynthesis via salvage pathway; L-methionine from S-methyl-5-thio-alpha-D-ribose 1-phosphate: step 3/6. The protein operates within amino-acid biosynthesis; L-methionine biosynthesis via salvage pathway; L-methionine from S-methyl-5-thio-alpha-D-ribose 1-phosphate: step 4/6. Its function is as follows. Bifunctional enzyme that catalyzes the enolization of 2,3-diketo-5-methylthiopentyl-1-phosphate (DK-MTP-1-P) into the intermediate 2-hydroxy-3-keto-5-methylthiopentenyl-1-phosphate (HK-MTPenyl-1-P), which is then dephosphorylated to form the acireductone 1,2-dihydroxy-3-keto-5-methylthiopentene (DHK-MTPene). This Xanthomonas campestris pv. campestris (strain 8004) protein is Enolase-phosphatase E1.